The sequence spans 247 residues: 2-dehydro-3-deoxy-phosphogluconate aldolase (247 aa).

Belongs to the DagF family.

It carries out the reaction 2-dehydro-3-deoxy-6-phospho-D-gluconate = D-glyceraldehyde 3-phosphate + pyruvate. Its function is as follows. Involved in the catabolism of D-glucosaminate. Catalyzes the conversion of keto-3-deoxygluconate 6-phosphate (KDGP) to yield pyruvate and glyceraldehyde-3-phosphate. This Salmonella typhimurium (strain 14028s / SGSC 2262) protein is 2-dehydro-3-deoxy-phosphogluconate aldolase.